We begin with the raw amino-acid sequence, 726 residues long: Long-chain-fatty-acid--CoA ligase ACSBG1 (726 aa).

Residues 1-39 are disordered; it reads MPDSRAAPQESLLDASLGTTQENVGTSSLTDGQTLSKEP. A compositionally biased stretch (polar residues) spans 17 to 36; the sequence is LGTTQENVGTSSLTDGQTLS. Serine 36 carries the phosphoserine modification. Tyrosine 641 is subject to Phosphotyrosine. A disordered region spans residues 707 to 726; sequence SKQGSSLPGFSLRWQTGASS.

The protein belongs to the ATP-dependent AMP-binding enzyme family. Bubblegum subfamily.

The protein resides in the cytoplasm. The protein localises to the cytoplasmic vesicle. It localises to the microsome. Its subcellular location is the endoplasmic reticulum. It is found in the cell membrane. It catalyses the reaction a long-chain fatty acid + ATP + CoA = a long-chain fatty acyl-CoA + AMP + diphosphate. The enzyme catalyses (E)-hexadec-2-enoate + ATP + CoA = (2E)-hexadecenoyl-CoA + AMP + diphosphate. It carries out the reaction hexadecanoate + ATP + CoA = hexadecanoyl-CoA + AMP + diphosphate. In terms of biological role, catalyzes the conversion of fatty acids such as long-chain and very long-chain fatty acids to their active form acyl-CoAs for both synthesis of cellular lipids, and degradation via beta-oxidation. Can activate diverse saturated, monosaturated and polyunsaturated fatty acids. The sequence is that of Long-chain-fatty-acid--CoA ligase ACSBG1 from Bos taurus (Bovine).